The chain runs to 715 residues: Elongation factor G (715 aa).

Residues 8–290 form the tr-type G domain; that stretch reads NRYRNIGICA…AVIDFLPAPT (283 aa). GTP-binding positions include 17-24, 88-92, and 142-145; these read AHVDAGKT, DTPGH, and NKMD.

The protein belongs to the TRAFAC class translation factor GTPase superfamily. Classic translation factor GTPase family. EF-G/EF-2 subfamily.

The protein resides in the cytoplasm. Catalyzes the GTP-dependent ribosomal translocation step during translation elongation. During this step, the ribosome changes from the pre-translocational (PRE) to the post-translocational (POST) state as the newly formed A-site-bound peptidyl-tRNA and P-site-bound deacylated tRNA move to the P and E sites, respectively. Catalyzes the coordinated movement of the two tRNA molecules, the mRNA and conformational changes in the ribosome. This Pseudomonas fluorescens (strain ATCC BAA-477 / NRRL B-23932 / Pf-5) protein is Elongation factor G.